The primary structure comprises 177 residues: Phycocyanin-645 beta chain (177 aa).

Tyr-18 contributes to the mesobiliverdin binding site. (2R,3E)-phycocyanobilin is bound by residues Lys-28, Asn-35, and Asp-39. 15,16-dihydrobiliverdin contacts are provided by Cys-50, Asp-54, and Cys-61. Positions 77, 82, 84, and 85 each coordinate (2R,3E)-phycocyanobilin. A 15,16-dihydrobiliverdin-binding site is contributed by Gln-148. Pro-154, Gly-156, and Cys-158 together coordinate (2R,3E)-phycocyanobilin.

It belongs to the phycobiliprotein family. In terms of assembly, heterotetramer of 2 different alpha chains and 2 identical beta chains which form 2 alpha-beta heterodimers within the heterotetramer. In terms of processing, contains two phycocyanobilin chromophores, one mesobiliverdin chromophore and one 15,16-dihydrobiliverdin chromophore with binding mediated by both the alpha and beta subunits.

The protein localises to the plastid. It is found in the chloroplast thylakoid membrane. Its function is as follows. Light-harvesting photosynthetic tetrapyrrole chromophore-protein from the phycobiliprotein complex. The polypeptide is Phycocyanin-645 beta chain (Chroomonas sp).